The following is a 411-amino-acid chain: Dual-specificity RNA methyltransferase RlmN (411 aa).

Glu-124 serves as the catalytic Proton acceptor. Positions 130-379 constitute a Radical SAM core domain; that stretch reads EEGRGTLCIS…IRTPRGRDIL (250 aa). Cysteines 137 and 382 form a disulfide. Cys-144, Cys-148, and Cys-151 together coordinate [4Fe-4S] cluster. Residues 208 to 209, Ser-240, 262 to 264, and Asn-339 contribute to the S-adenosyl-L-methionine site; these read GE and SLH. The active-site S-methylcysteine intermediate is Cys-382.

This sequence belongs to the radical SAM superfamily. RlmN family. Requires [4Fe-4S] cluster as cofactor.

The protein localises to the cytoplasm. It carries out the reaction adenosine(2503) in 23S rRNA + 2 reduced [2Fe-2S]-[ferredoxin] + 2 S-adenosyl-L-methionine = 2-methyladenosine(2503) in 23S rRNA + 5'-deoxyadenosine + L-methionine + 2 oxidized [2Fe-2S]-[ferredoxin] + S-adenosyl-L-homocysteine. The catalysed reaction is adenosine(37) in tRNA + 2 reduced [2Fe-2S]-[ferredoxin] + 2 S-adenosyl-L-methionine = 2-methyladenosine(37) in tRNA + 5'-deoxyadenosine + L-methionine + 2 oxidized [2Fe-2S]-[ferredoxin] + S-adenosyl-L-homocysteine. Specifically methylates position 2 of adenine 2503 in 23S rRNA and position 2 of adenine 37 in tRNAs. m2A2503 modification seems to play a crucial role in the proofreading step occurring at the peptidyl transferase center and thus would serve to optimize ribosomal fidelity. The sequence is that of Dual-specificity RNA methyltransferase RlmN from Rhizobium meliloti (strain 1021) (Ensifer meliloti).